Reading from the N-terminus, the 484-residue chain is Keratin, type I cytoskeletal 14 (484 aa).

Residues 1–20 (MATCSRQFTSSSSMKGSCGI) form a disordered region. The head stretch occupies residues 1–120 (MATCSRQFTS…GIGDGLLVGS (120 aa)). Residues 121 to 156 (EKVTMQNLNDRLATYLDKVRALEEANTELEVKIRDW) are coil 1A. One can recognise an IF rod domain in the interval 121-432 (EKVTMQNLND…RLLEGEDAHL (312 aa)). The tract at residues 157–174 (YQRQRPTEIKDYSPYFKT) is linker 1. Residues 175–266 (IEDLKSKILA…KNHEEEMASM (92 aa)) are coil 1B. The segment at 267 to 289 (RGQVGGDVNVEMDAAPGVDLSRI) is linker 12. The segment at 290–428 (LNEMRDQYEK…ATYRRLLEGE (139 aa)) is coil 2. Positions 429–484 (DAHLSSSQFSSSSQFSSGSQSSRDVTSTNRQIRTKVMDVHDGKVVSTHEQVLRTKN) are tail. Residues 431 to 484 (HLSSSQFSSSSQFSSGSQSSRDVTSTNRQIRTKVMDVHDGKVVSTHEQVLRTKN) are interaction with Type I keratins and keratin filaments. Residues 435–450 (SQFSSSSQFSSGSQSS) are compositionally biased toward low complexity. The segment at 435-457 (SQFSSSSQFSSGSQSSRDVTSTN) is disordered. Ser447 carries the phosphoserine modification.

The protein belongs to the intermediate filament family. As to quaternary structure, heterotetramer of two type I and two type II keratins. Forms a disulfide-linked heterodimer (via 2B domains) with KRT5 (via 2B domains). Forms a heterodimer with KRT1; the interaction is more abundant in the absence of KRT5. Interacts with PLEC isoform 1C, when in a heterodimer with KRT5. Interacts with TRADD and with keratin filaments. Associates with other type I keratins. Interacts with EPPK1. Interacts with KLHL24. Interacts with PKP1 (via N-terminus) and PKP2. A disulfide bond is formed between rather than within filaments and promotes the formation of a keratin filament cage around the nucleus. Post-translationally, ubiquitinated by the BCR(KLHL24) E3 ubiquitin ligase complex. Expressed in the corneal epithelium (at protein level). Expressed in the basal layer of the epidermis and the outer root sheath of hair follicles (at protein level). Expressed in the epithelial basal layer in the tail epidermis. Expressed in the parabasal cell row, basal cell layer, and suprabasal epithelial layer of the tongue.

The protein localises to the cytoplasm. Its subcellular location is the nucleus. Functionally, the nonhelical tail domain is involved in promoting KRT5-KRT14 filaments to self-organize into large bundles and enhances the mechanical properties involved in resilience of keratin intermediate filaments in vitro. The polypeptide is Keratin, type I cytoskeletal 14 (Krt14) (Mus musculus (Mouse)).